Consider the following 335-residue polypeptide: NADH-quinone oxidoreductase subunit H (335 aa).

The next 8 membrane-spanning stretches (helical) occupy residues 15 to 35, 81 to 101, 114 to 134, 154 to 174, 187 to 207, 238 to 258, 270 to 290, and 307 to 327; these read VVKA…LSFV, MIFT…FSII, IGLL…LFAG, VSYE…VGSF, LWFI…GVAV, FFVG…TLFF, QVPF…FILL, and WKFC…IVLY.

Belongs to the complex I subunit 1 family. NDH-1 is composed of 13 different subunits. Subunits NuoA, H, J, K, L, M, N constitute the membrane sector of the complex.

The protein localises to the cell inner membrane. The enzyme catalyses a quinone + NADH + 5 H(+)(in) = a quinol + NAD(+) + 4 H(+)(out). Its function is as follows. NDH-1 shuttles electrons from NADH, via FMN and iron-sulfur (Fe-S) centers, to quinones in the respiratory chain. The immediate electron acceptor for the enzyme in this species is believed to be ubiquinone. Couples the redox reaction to proton translocation (for every two electrons transferred, four hydrogen ions are translocated across the cytoplasmic membrane), and thus conserves the redox energy in a proton gradient. This subunit may bind ubiquinone. This is NADH-quinone oxidoreductase subunit H from Pseudomonas putida (strain GB-1).